A 642-amino-acid polypeptide reads, in one-letter code: Transmembrane 9 superfamily member 4 (642 aa).

An N-terminal signal peptide occupies residues 1–23 (MATAMDWLPWSLLLFSLMCETSA). At 24–281 (FYVPGVAPIN…TMSDVQIHWF (258 aa)) the chain is on the extracellular side. A helical transmembrane segment spans residues 282-302 (SIINSVVVVFFLSGILSMIII). Residues 303 to 346 (RTLRKDIANYNKEDDIEDTMEESGWKLVHGDVFRPPQYPMILSS) are Cytoplasmic-facing. The residue at position 312 (Y312) is a Phosphotyrosine. The helical transmembrane segment at 347-367 (LLGSGIQLFCMILIVIFVAML) threads the bilayer. Residues 368-376 (GMLSPSSRG) lie on the Extracellular side of the membrane. A helical transmembrane segment spans residues 377 to 397 (ALMTTACFLFMFMGVFGGFSA). At 398–416 (GRLYRTLKGHRWKKGAFCT) the chain is on the cytoplasmic side. Residues 417–437 (ATLYPGVVFGICFVLNCFIWG) form a helical membrane-spanning segment. The Extracellular segment spans residues 438-449 (KHSSGAVPFPTM). Residues 450-470 (VALLCMWFGISLPLVYLGYYF) traverse the membrane as a helical segment. The Cytoplasmic segment spans residues 471–501 (GFRKQPYDNPVRTNQIPRQIPEQRWYMNRFV). The chain crosses the membrane as a helical span at residues 502–522 (GILMAGILPFGAMFIELFFIF). The Extracellular portion of the chain corresponds to 523–535 (SAIWENQFYYLFG). A helical transmembrane segment spans residues 536-556 (FLFLVFIILVVSCSQISIVMV). The Cytoplasmic segment spans residues 557-570 (YFQLCAEDYRWWWR). A helical membrane pass occupies residues 571–591 (NFLVSGGSAFYVLVYAIFYFV). At 592–598 (NKLDIVE) the chain is on the extracellular side. Residues 599-619 (FIPSLLYFGYTALMVLSFWLL) form a helical membrane-spanning segment. Over 620 to 642 (TGTIGFYAAYMFVRKIYAAVKID) the chain is Cytoplasmic.

The protein belongs to the nonaspanin (TM9SF) (TC 9.A.2) family. As to quaternary structure, interacts with ATP6V1H in colon cancer cells. As to expression, highly expressed in metastatic melanoma cells whereas it is undetectable in primary melanoma cells, healthy skin tissues and peripheral blood lymphocytes. Expressed in CD34(+) hematopoietic progenitor cells and during monocyte and granulocyte differentiation. Overexpressed in acute myeloid leukemia, in particular in those displaying granulocytic differentiation (at protein level).

Its subcellular location is the membrane. It localises to the golgi apparatus. The protein localises to the early endosome. Associates with proteins harboring glycine-rich transmembrane domains and ensures their efficient localization to the cell surface. Regulates the assembly and activity of V-ATPase in colon cancer cells via its interaction with V-type proton ATPase subunit H (ATP6V1H) and contributes to V-ATPase-mediated pH alterations in cancer cells which play an important role in drug resistance and invasiveness of colon cancer cells. Plays an important role in an atypical phagocytic activity of metastatic melanoma cells called cannibalism and is involved in the pH regulation of the intracellular vesicles in tumor cells. In Homo sapiens (Human), this protein is Transmembrane 9 superfamily member 4 (TM9SF4).